The following is a 427-amino-acid chain: Cryptic catabolic NAD-specific glutamate dehydrogenase GudB (427 aa).

Substrate is bound by residues Lys80 and Lys107. Lys119 serves as the catalytic Proton donor. Residues Thr203 and Asn234 each coordinate NAD(+). Substrate is bound at residue Ser361.

It belongs to the Glu/Leu/Phe/Val dehydrogenases family. As to quaternary structure, homohexamer.

The catalysed reaction is L-glutamate + NAD(+) + H2O = 2-oxoglutarate + NH4(+) + NADH + H(+). In terms of biological role, gudB seems to be intrinsically inactive, however spontaneous mutations removing a 9-bp direct repeat within the wild-type gudB sequence activated the GudB protein and allowed more-efficient utilization of amino acids of the glutamate family (called gutB1). This 3 amino acid insertion presumably causes severe destabilization of the fold of the protein, leading to an inactive enzyme that is very quickly degraded. The cryptic GudB serves as a buffer that may compensate for mutations in the rocG gene and that can also be decryptified for the utilization of glutamate as a single carbon source in the absence of arginine. It is unable to synthesize glutamate. This is Cryptic catabolic NAD-specific glutamate dehydrogenase GudB from Bacillus subtilis (strain 168).